The sequence spans 815 residues: Serotype-specific mannosyltransferase WbdA (815 aa).

An alpha-(1-&gt;2)-mannosyltransferase region spans residues 1–374; that stretch reads MSRAIIENAG…WANTAHLAID (374 aa). Residues 431 to 804 form an alpha-(1-&gt;3)-mannosyltransferase region; it reads KLLVDISVLA…WKQSAELLLK (374 aa).

This sequence belongs to the glycosyltransferase group 1 family. Glycosyltransferase 4 subfamily.

The protein resides in the cell inner membrane. Its pathway is bacterial outer membrane biogenesis; LPS O-antigen biosynthesis. Mannosyltransferase involved in the biosynthesis of the repeat unit of the lipopolysaccharide (LPS) O-antigen region. This Escherichia coli protein is Serotype-specific mannosyltransferase WbdA.